The chain runs to 138 residues: PTS system sorbose-specific EIIA component (138 aa).

The region spanning 1 to 125 (MEIILVGHAH…KIKEEFSTSL (125 aa)) is the PTS EIIA type-4 domain. Histidine 8 (tele-phosphohistidine intermediate) is an active-site residue. Histidine 8 carries the post-translational modification Phosphohistidine; by HPr.

The protein resides in the cytoplasm. Functionally, the phosphoenolpyruvate-dependent sugar phosphotransferase system (PTS), a major carbohydrate active transport system, catalyzes the phosphorylation of incoming sugar substrates concomitant with their translocation across the cell membrane. The enzyme II SorABCD PTS system is involved in L-sorbose transport. This Lacticaseibacillus casei (Lactobacillus casei) protein is PTS system sorbose-specific EIIA component.